A 506-amino-acid chain; its full sequence is MPMSSRDRDLHPGHHHFGSCSPLSQLWPGPEPKSVKGLYYSRARKVGNQDASPEANLKEILVNVGGQRYLLPWSTLDAFPLSRLSRLRLCRSHEEITQLCDDYDEDSQEFFFDRNPSAFGVIVSFLAAGKLVLLREMCALSFREELSYWGIEETNLERCCLRKLLKKLEEAAELRREEAAQRQQQRQACHSEVQASRWARSMNQLREMVEDPQSGLPGKVFACLSVLFVATTAVSLCVSTMPDFRAEEGKGECTRKCYYIFVVESICVAWFSLEFCLRFVQAPNKCQFFRGPLNVIDILAISPYYVSLAVSDESPEAGERPSSSSYLEKVGLVLRVLRALRILYVMRLARHSLGLQTLGLTVRRCAREFGLLMLFLAVAVTLFSPLVYVAENESGRVLEFTSIPASYWWAIISMTTVGYGDMVPRSVPGQMVALSSILSGILIMAFPATSIFHTFSHSYLELKREQEQVQARLRRLQNTNSASERELLSDVDDLVPEGLTSPGRYM.

At 1–216 the chain is on the cytoplasmic side; sequence MPMSSRDRDL…EMVEDPQSGL (216 aa). A helical membrane pass occupies residues 217–238; the sequence is PGKVFACLSVLFVATTAVSLCV. The Extracellular portion of the chain corresponds to 239 to 259; that stretch reads STMPDFRAEEGKGECTRKCYY. A helical membrane pass occupies residues 260–281; that stretch reads IFVVESICVAWFSLEFCLRFVQ. The Cytoplasmic segment spans residues 282 to 292; the sequence is APNKCQFFRGP. The helical transmembrane segment at 293–312 threads the bilayer; that stretch reads LNVIDILAISPYYVSLAVSD. Topologically, residues 313 to 326 are extracellular; the sequence is ESPEAGERPSSSSY. The chain crosses the membrane as a helical; Voltage-sensor span at residues 327-351; the sequence is LEKVGLVLRVLRALRILYVMRLARH. Over 352-366 the chain is Cytoplasmic; it reads SLGLQTLGLTVRRCA. A helical transmembrane segment spans residues 367-388; sequence REFGLLMLFLAVAVTLFSPLVY. The Extracellular segment spans residues 389 to 403; it reads VAENESGRVLEFTSI. Residues 404-415 constitute an intramembrane region (helical); the sequence is PASYWWAIISMT. Residues 416–421 carry the Selectivity filter motif; sequence TVGYGD. Residues 416–423 lie within the membrane without spanning it; the sequence is TVGYGDMV. Topologically, residues 424–430 are extracellular; the sequence is PRSVPGQ. The helical transmembrane segment at 431 to 459 threads the bilayer; sequence MVALSSILSGILIMAFPATSIFHTFSHSY. The Cytoplasmic segment spans residues 460–506; the sequence is LELKREQEQVQARLRRLQNTNSASERELLSDVDDLVPEGLTSPGRYM.

It belongs to the potassium channel family. G (TC 1.A.1.2) subfamily. Kv6.4/KCNG4 sub-subfamily. Heterotetramer with KCNB1. Does not form homomultimer.

It is found in the cell membrane. Regulatory subunit of the voltage-gated potassium (Kv) channel which, when coassembled with KCNB1, modulates the kinetics parameters of the heterotetrameric channel namely the time course of activation, deactivation and inactivation and on the voltage-dependence of activation. Potassium channel subunit that does not form functional channels by itself. Reduces the deactivation rate. Modulates the threshold for activation by shifting by approximately 20 mV in hyperpolarizing direction. Markedly changes the inactivation by shifting the voltage dependence of inactivation by approximately 40 mV in hyperpolarizing direction. Acceleratee activation and enhances the time course of activation. The polypeptide is Voltage-gated potassium channel regulatory subunit KCNG4 (Mus musculus (Mouse)).